A 244-amino-acid polypeptide reads, in one-letter code: MGQPVASRGRAATPTIGKAMLNKYARAFFTRVLTPFAAFLIRRGVSPDTVTLLGTAGVIAGALVFYPRGEFFWGTIVITLFVFSDLVDGNMARQLGRTSRWGAFLDSTLDRVADGAIFGGFALWYAGGGDNNVLCAVSIFCLASGQVVSYTKARGESIGLPVAVNGLVERAERLVISLVAAGFAGLHKFGVPGIQVLLPIALWIVAVGSLVTLIQRVVTVRRESAEADAATAAENASQGSGAAS.

3 helical membrane passes run 24–42, 49–66, and 72–91; these read YARAFFTRVLTPFAAFLIR, TVTLLGTAGVIAGALVFY, and FWGTIVITLFVFSDLVDGNM. Residue 48–51 participates in a CDP-1,2-diacyl-sn-glycerol binding; that stretch reads DTVT. 2 residues coordinate Mg(2+): D85 and D88. A CDP-1,2-diacyl-sn-glycerol-binding residues include G89, R93, and S99. Mg(2+) contacts are provided by D106 and D110. D110 acts as the Proton acceptor in catalysis. The next 3 membrane-spanning stretches (helical) occupy residues 117–137, 174–190, and 196–214; these read IFGGFALWYAGGGDNNVLCAV, LVISLVAAGFAGLHKFG, and VLLPIALWIVAVGSLVTLI.

This sequence belongs to the CDP-alcohol phosphatidyltransferase class-I family. Homodimer. It depends on Mg(2+) as a cofactor.

The protein localises to the cell membrane. It catalyses the reaction a CDP-1,2-diacyl-sn-glycerol + 1D-myo-inositol 3-phosphate = a 1,2-diacyl-sn-glycero-3-phospho-(1D-myo-inositol-3-phosphate) + CMP + H(+). The enzyme catalyses 1,2-di-(9Z-octadecenoyl)-sn-glycero-3-cytidine-5'-diphosphate + 1D-myo-inositol 3-phosphate = 1,2-di-(9Z-octadecenoyl)-sn-glycero-3-phospho-(1D-myo-inositol-3-phosphate) + CMP + H(+). The protein operates within phospholipid metabolism; phosphatidylinositol phosphate biosynthesis. Catalyzes the conjugation of the 1'-hydroxyl group of D-myo-inositol-3-phosphate (also named L-myo-inositol-1-phosphate) with a lipid tail of cytidine diphosphate diacylglycerol (CDP-DAG), forming phosphatidylinositol phosphate (PIP) and CMP. PIP is a precursor of phosphatidylinositol (PI) which is an essential lipid required for cell wall formation. This is Phosphatidylinositol phosphate synthase from Streptomyces avermitilis (strain ATCC 31267 / DSM 46492 / JCM 5070 / NBRC 14893 / NCIMB 12804 / NRRL 8165 / MA-4680).